The primary structure comprises 129 residues: Protein HMF1 (129 aa).

A Glycyl lysine isopeptide (Lys-Gly) (interchain with G-Cter in ubiquitin) cross-link involves residue K52.

Belongs to the RutC family.

It is found in the cytoplasm. The protein localises to the nucleus. Its subcellular location is the mitochondrion intermembrane space. The chain is Protein HMF1 (HMF1) from Saccharomyces cerevisiae (strain ATCC 204508 / S288c) (Baker's yeast).